Reading from the N-terminus, the 391-residue chain is Putative gustatory receptor 36b (391 aa).

At M1–W4 the chain is on the cytoplasmic side. Residues V5–E25 form a helical membrane-spanning segment. Residues F26 to C39 lie on the Extracellular side of the membrane. A helical transmembrane segment spans residues T40–A60. Over H61 to L74 the chain is Cytoplasmic. The helical transmembrane segment at H75 to L95 threads the bilayer. Over N96–W127 the chain is Extracellular. A helical transmembrane segment spans residues G128–V148. The Cytoplasmic segment spans residues D149–K165. Residues L166–I186 traverse the membrane as a helical segment. Over R187–L284 the chain is Extracellular. Residues S285–V305 traverse the membrane as a helical segment. Topologically, residues N306–P363 are cytoplasmic. Residues I364–I384 form a helical membrane-spanning segment. Over Q385–F391 the chain is Extracellular.

Belongs to the insect chemoreceptor superfamily. Gustatory receptor (GR) family. Gr22e subfamily. In terms of tissue distribution, expressed in neurons of the terminal external chemosensory organ of larvae.

It localises to the cell membrane. Probable gustatory receptor which mediates acceptance or avoidance behavior, depending on its substrates. The chain is Putative gustatory receptor 36b (Gr36b) from Drosophila melanogaster (Fruit fly).